The chain runs to 432 residues: Glutamyl-tRNA reductase (432 aa).

Residues 49 to 52 (TCNR), Ser101, 106 to 108 (EPQ), and Gln112 each bind substrate. Cys50 functions as the Nucleophile in the catalytic mechanism. Residue 181–186 (GAGETI) participates in NADP(+) binding. The interval 407–432 (FPEKPGYQHPPIATPIVRTDDADPAP) is disordered.

This sequence belongs to the glutamyl-tRNA reductase family. Homodimer.

It catalyses the reaction (S)-4-amino-5-oxopentanoate + tRNA(Glu) + NADP(+) = L-glutamyl-tRNA(Glu) + NADPH + H(+). It functions in the pathway porphyrin-containing compound metabolism; protoporphyrin-IX biosynthesis; 5-aminolevulinate from L-glutamyl-tRNA(Glu): step 1/2. Catalyzes the NADPH-dependent reduction of glutamyl-tRNA(Glu) to glutamate 1-semialdehyde (GSA). In Xanthomonas oryzae pv. oryzae (strain PXO99A), this protein is Glutamyl-tRNA reductase.